The sequence spans 102 residues: MEKSKRLFIKSKRSFRRRLPPIQSGDRIDYKNMGLICRFISEQGKILSRRVNRLTLKQQRLITIAIKQARILSSLPFLNNEKQFEKSESTEKITTLRKKNRN.

The protein belongs to the bacterial ribosomal protein bS18 family. As to quaternary structure, part of the 30S ribosomal subunit.

It is found in the plastid. Its subcellular location is the chloroplast. This is Small ribosomal subunit protein bS18c from Phaseolus vulgaris (Kidney bean).